The following is a 341-amino-acid chain: Chitin synthase 3 complex protein CSI2 (341 aa).

Residues 35–70 (SSSTKAADSSSKGSSSAKTTTSLGKSSVTSKDVSSS) are compositionally biased toward low complexity. Disordered regions lie at residues 35–78 (SSST…SSTK), 272–291 (DSLS…GKFT), and 298–341 (NYTS…DGKE).

In terms of biological role, appears to be a structural component of the chitin synthase 3 complex. This Saccharomyces cerevisiae (strain ATCC 204508 / S288c) (Baker's yeast) protein is Chitin synthase 3 complex protein CSI2 (CSI2).